A 174-amino-acid polypeptide reads, in one-letter code: Large ribosomal subunit protein uL18 (174 aa).

Belongs to the universal ribosomal protein uL18 family. As to quaternary structure, part of the 50S ribosomal subunit. Contacts the 5S and 23S rRNAs.

In terms of biological role, this is one of the proteins that bind and probably mediate the attachment of the 5S RNA into the large ribosomal subunit, where it forms part of the central protuberance. This chain is Large ribosomal subunit protein uL18, found in Methanocorpusculum labreanum (strain ATCC 43576 / DSM 4855 / Z).